The chain runs to 339 residues: NADH-quinone oxidoreductase subunit H (339 aa).

Helical transmembrane passes span 9-29 (IFPL…LILC), 50-70 (PNVV…KLLF), 82-102 (ILFI…WAVI), 115-135 (VGVL…IIAG), 161-181 (MGLV…SGII), 187-207 (MPWW…ISVL), 235-255 (MGFA…SAMT), 275-295 (IPGF…FLWI), and 311-331 (GWKV…SVLV).

This sequence belongs to the complex I subunit 1 family. In terms of assembly, NDH-1 is composed of 14 different subunits. Subunits NuoA, H, J, K, L, M, N constitute the membrane sector of the complex.

Its subcellular location is the cell inner membrane. It catalyses the reaction a quinone + NADH + 5 H(+)(in) = a quinol + NAD(+) + 4 H(+)(out). Functionally, NDH-1 shuttles electrons from NADH, via FMN and iron-sulfur (Fe-S) centers, to quinones in the respiratory chain. The immediate electron acceptor for the enzyme in this species is believed to be ubiquinone. Couples the redox reaction to proton translocation (for every two electrons transferred, four hydrogen ions are translocated across the cytoplasmic membrane), and thus conserves the redox energy in a proton gradient. This subunit may bind ubiquinone. The sequence is that of NADH-quinone oxidoreductase subunit H from Rickettsia felis (strain ATCC VR-1525 / URRWXCal2) (Rickettsia azadi).